Consider the following 157-residue polypeptide: MSRNNEELQGISLLGNQKTQYPTGYAPEILEAFDNKHPDNDYFVKFVCPEFTSLCPMTGQPDFATIYIRYIPHIKMVESKSLKLYLFSFRNHGDFHEDCVNIIMKDLIALMDPKYIEVFGEFTPRGGIAIHPFANYGKAGTEFETLARKRLFEHDAQ.

The active-site Thioimide intermediate is cysteine 55. The active-site Proton donor is the aspartate 62. Substrate-binding positions include 77–79 (VES) and 96–97 (HE).

This sequence belongs to the GTP cyclohydrolase I family. QueF type 1 subfamily.

It localises to the cytoplasm. It carries out the reaction 7-aminomethyl-7-carbaguanine + 2 NADP(+) = 7-cyano-7-deazaguanine + 2 NADPH + 3 H(+). It functions in the pathway tRNA modification; tRNA-queuosine biosynthesis. Functionally, catalyzes the NADPH-dependent reduction of 7-cyano-7-deazaguanine (preQ0) to 7-aminomethyl-7-deazaguanine (preQ1). The polypeptide is NADPH-dependent 7-cyano-7-deazaguanine reductase (Neisseria meningitidis serogroup B (strain ATCC BAA-335 / MC58)).